The sequence spans 114 residues: NADH dehydrogenase [ubiquinone] 1 subunit C2, isoform 2 (114 aa).

The helical transmembrane segment at 56–75 (GLHRQLLYITAFFFAGYYLV) threads the bilayer.

Belongs to the complex I NDUFC2 subunit family. Complex I is composed of 45 different subunits.

It is found in the mitochondrion inner membrane. In terms of biological role, accessory subunit of the mitochondrial membrane respiratory chain NADH dehydrogenase (Complex I), that is believed not to be involved in catalysis. Complex I functions in the transfer of electrons from NADH to the respiratory chain. The immediate electron acceptor for the enzyme is believed to be ubiquinone. This Homo sapiens (Human) protein is NADH dehydrogenase [ubiquinone] 1 subunit C2, isoform 2 (NDUFC2-KCTD14).